A 363-amino-acid chain; its full sequence is Spermidine/putrescine import ATP-binding protein PotA (363 aa).

Residues 6–236 (VEFKNVIKKY…PINHFVADFI (231 aa)) form the ABC transporter domain. Position 38-45 (38-45 (GPSGCGKT)) interacts with ATP.

It belongs to the ABC transporter superfamily. Spermidine/putrescine importer (TC 3.A.1.11.1) family. The complex is composed of two ATP-binding proteins (PotA), two transmembrane proteins (PotB and PotC) and a solute-binding protein (PotD).

Its subcellular location is the cell membrane. The catalysed reaction is ATP + H2O + polyamine-[polyamine-binding protein]Side 1 = ADP + phosphate + polyamineSide 2 + [polyamine-binding protein]Side 1.. Functionally, part of the ABC transporter complex PotABCD involved in spermidine/putrescine import. Responsible for energy coupling to the transport system. The protein is Spermidine/putrescine import ATP-binding protein PotA of Latilactobacillus sakei subsp. sakei (strain 23K) (Lactobacillus sakei subsp. sakei).